The primary structure comprises 83 residues: Small ribosomal subunit protein bS16c (83 aa).

This sequence belongs to the bacterial ribosomal protein bS16 family.

It is found in the plastid. The protein localises to the chloroplast. In Chaetosphaeridium globosum (Charophycean green alga), this protein is Small ribosomal subunit protein bS16c.